The following is a 246-amino-acid chain: UDP-N-acetyl-D-mannosaminuronic acid transferase (246 aa).

This sequence belongs to the glycosyltransferase 26 family.

It carries out the reaction UDP-N-acetyl-alpha-D-mannosaminouronate + N-acetyl-alpha-D-glucosaminyl-di-trans,octa-cis-undecaprenyl diphosphate = beta-D-ManNAcA-(1-&gt;4)-alpha-D-GlcNAc-di-trans,octa-cis-undecaprenyl diphosphate + UDP + H(+). It functions in the pathway bacterial outer membrane biogenesis; enterobacterial common antigen biosynthesis. Its function is as follows. Catalyzes the synthesis of Und-PP-GlcNAc-ManNAcA (Lipid II), the second lipid-linked intermediate involved in enterobacterial common antigen (ECA) synthesis. This Escherichia coli O127:H6 (strain E2348/69 / EPEC) protein is UDP-N-acetyl-D-mannosaminuronic acid transferase.